The following is a 149-amino-acid chain: Large ribosomal subunit protein uL11 (149 aa).

It belongs to the universal ribosomal protein uL11 family. As to quaternary structure, part of the ribosomal stalk of the 50S ribosomal subunit. Interacts with L10 and the large rRNA to form the base of the stalk. L10 forms an elongated spine to which L12 dimers bind in a sequential fashion forming a multimeric L10(L12)X complex. Post-translationally, one or more lysine residues are methylated.

Its function is as follows. Forms part of the ribosomal stalk which helps the ribosome interact with GTP-bound translation factors. The chain is Large ribosomal subunit protein uL11 from Methylobacterium sp. (strain 4-46).